The chain runs to 359 residues: 3-dehydroquinate synthase (359 aa).

Residues 71–76 (DGEAYK), 105–109 (GVVGD), 129–130 (TT), lysine 142, and lysine 151 contribute to the NAD(+) site. Residues glutamate 184, histidine 247, and histidine 264 each contribute to the Zn(2+) site.

This sequence belongs to the sugar phosphate cyclases superfamily. Dehydroquinate synthase family. The cofactor is Co(2+). Zn(2+) is required as a cofactor. It depends on NAD(+) as a cofactor.

It is found in the cytoplasm. The catalysed reaction is 7-phospho-2-dehydro-3-deoxy-D-arabino-heptonate = 3-dehydroquinate + phosphate. It functions in the pathway metabolic intermediate biosynthesis; chorismate biosynthesis; chorismate from D-erythrose 4-phosphate and phosphoenolpyruvate: step 2/7. Catalyzes the conversion of 3-deoxy-D-arabino-heptulosonate 7-phosphate (DAHP) to dehydroquinate (DHQ). This Burkholderia orbicola (strain MC0-3) protein is 3-dehydroquinate synthase.